The sequence spans 65 residues: Small ribosomal subunit protein bS21 (65 aa).

This sequence belongs to the bacterial ribosomal protein bS21 family.

In Trichlorobacter lovleyi (strain ATCC BAA-1151 / DSM 17278 / SZ) (Geobacter lovleyi), this protein is Small ribosomal subunit protein bS21.